We begin with the raw amino-acid sequence, 120 residues long: Chaperonin GroEL (120 aa).

D23–T27 provides a ligand contact to ATP.

It belongs to the chaperonin (HSP60) family. Forms a cylinder of 14 subunits composed of two heptameric rings stacked back-to-back. Interacts with the co-chaperonin GroES.

It is found in the cytoplasm. It catalyses the reaction ATP + H2O + a folded polypeptide = ADP + phosphate + an unfolded polypeptide.. In terms of biological role, together with its co-chaperonin GroES, plays an essential role in assisting protein folding. The GroEL-GroES system forms a nano-cage that allows encapsulation of the non-native substrate proteins and provides a physical environment optimized to promote and accelerate protein folding. The polypeptide is Chaperonin GroEL (Mycolicibacter nonchromogenicus (Mycobacterium nonchromogenicum)).